The sequence spans 732 residues: 1,4-alpha-glucan branching enzyme GlgB 1 (732 aa).

The active-site Nucleophile is the Asp411. Residue Glu464 is the Proton donor of the active site.

Belongs to the glycosyl hydrolase 13 family. GlgB subfamily. As to quaternary structure, monomer.

It catalyses the reaction Transfers a segment of a (1-&gt;4)-alpha-D-glucan chain to a primary hydroxy group in a similar glucan chain.. Its pathway is glycan biosynthesis; glycogen biosynthesis. Functionally, catalyzes the formation of the alpha-1,6-glucosidic linkages in glycogen by scission of a 1,4-alpha-linked oligosaccharide from growing alpha-1,4-glucan chains and the subsequent attachment of the oligosaccharide to the alpha-1,6 position. The sequence is that of 1,4-alpha-glucan branching enzyme GlgB 1 from Xanthomonas euvesicatoria pv. vesicatoria (strain 85-10) (Xanthomonas campestris pv. vesicatoria).